Reading from the N-terminus, the 876-residue chain is Exosome complex component 10 homolog (876 aa).

The tract at residues 1–22 is disordered; that stretch reads MSGEESMPDEEQKQSEEEEEMI. The 3'-5' exonuclease domain maps to 279 to 445; that stretch reads TMIDTKEKLE…YSYDMLREQL (167 aa). Residues Asp-303, Glu-305, Asp-361, and Asp-430 each contribute to the Mg(2+) site. One can recognise an HRDC domain in the interval 489 to 569; the sequence is NTRQDYALTH…VEARDVKLEK (81 aa). Composition is skewed to basic and acidic residues over residues 690-730, 741-752, and 834-847; these read EKQE…EFDA, VPDDPNKPKDPE, and KPVR…DPFH. Positions 690–876 are disordered; that stretch reads EKQEEEERKE…NRQGTINYKK (187 aa). Residues 848–861 show a composition bias toward basic residues; that stretch reads QKYRLKNKTKKNMA.

The protein belongs to the exosome component 10/RRP6 family. Component of the RNA exosome complex. Interacts with crn-5. Mg(2+) is required as a cofactor. In terms of tissue distribution, ubiquitously expressed.

Its subcellular location is the nucleus. The protein resides in the nucleolus. It localises to the nucleoplasm. In terms of biological role, catalytic component of the RNA exosome complex which has 3'-&gt;5' exoribonuclease activity and participates in a multitude of cellular RNA processing and degradation events. Involved in apoptotic DNA degradation. Involved in regulation of antisense ribosomal siRNA production. Involved in response to cold-warm shock. The chain is Exosome complex component 10 homolog from Caenorhabditis elegans.